Here is a 615-residue protein sequence, read N- to C-terminus: MPIQVLPPQLANQIAAGEVVERPASVVKELVENSLDAGATRIDIDIERGGAKLIRIRDNGCGIKKDELALALARHATSKIASLDDLEAIISLGFRGEALASISSVSRLTLTSRTAEQQEAWQAYAEGRDMNVTVKPAAHPVGTTLEVLDLFYNTPARRKFLRTEKTEFNHIDEIIRRIALARFDVTINLSHNGKIVRQYRAVPEGGQKERRLGAICGTAFLEQALAIEWQHGDLTLRGWVADPNHTTPALAEIQYCYVNGRMMRDRLINHAIRQACEDKLGADQQPAFVLYLEIDPHQVDVNVHPAKHEVRFHQSRLVHDFIYQGVLSVLQQQLETPLPLDDEPQPAPRAIPENRVAAGRNHFAEPAAREPVAPRYTPAPASGSRPAAPWPNAQPGYQKQQGEVYRQLLQTPAPMQKLKAPEPQEPALAANSQSFGRVLTIVHSDCALLERDGNISLLSLPVAERWLRQAQLTPGEAPVCAQPLLIPLRLKVSAEEKSALEKAQSALAELGIDFQSDAQHVTIRAVPLPLRQQNLQILIPELIGYLAKQSVFEPGNIAQWIARNLMSEHAQWSMAQAITLLADVEQLCPQLVKTPPGGLLQSVDLHPAIKALKDE.

The interval 363 to 397 (FAEPAAREPVAPRYTPAPASGSRPAAPWPNAQPGY) is disordered. The segment covering 364–391 (AEPAAREPVAPRYTPAPASGSRPAAPWP) has biased composition (low complexity).

Belongs to the DNA mismatch repair MutL/HexB family.

Its function is as follows. This protein is involved in the repair of mismatches in DNA. It is required for dam-dependent methyl-directed DNA mismatch repair. May act as a 'molecular matchmaker', a protein that promotes the formation of a stable complex between two or more DNA-binding proteins in an ATP-dependent manner without itself being part of a final effector complex. This is DNA mismatch repair protein MutL from Escherichia coli O8 (strain IAI1).